We begin with the raw amino-acid sequence, 193 residues long: Ion-translocating oxidoreductase complex subunit A (193 aa).

Helical transmembrane passes span 5–25 (LLLLIGTVLVNNFVLVKFLGL), 39–59 (IGMGLATTFVLTLASVCAYLV), 67–87 (LGIEYLRTMSFILVIAVVVQF), 102–122 (LLGIFLPLITTNCAVLGVALL), 134–154 (IIYGFGAAVGFSLVLILFASM), and 171–191 (SIAMITAGLMSLAFMGFTGLV).

Belongs to the NqrDE/RnfAE family. As to quaternary structure, the complex is composed of six subunits: RnfA, RnfB, RnfC, RnfD, RnfE and RnfG.

The protein localises to the cell inner membrane. Its function is as follows. Part of a membrane-bound complex that couples electron transfer with translocation of ions across the membrane. This is Ion-translocating oxidoreductase complex subunit A from Vibrio cholerae serotype O1 (strain ATCC 39315 / El Tor Inaba N16961).